Here is a 107-residue protein sequence, read N- to C-terminus: uncharacterized protein (107 aa).

This is an uncharacterized protein from Acanthamoeba polyphaga mimivirus (APMV).